The chain runs to 314 residues: Olfactory receptor 5B3 (314 aa).

At 1-23 (MENKTEVTQFILLGLTNDSELQV) the chain is on the extracellular side. Residues asparagine 3 and asparagine 17 are each glycosylated (N-linked (GlcNAc...) asparagine). The chain crosses the membrane as a helical span at residues 24–44 (PLFITFPFIYIITLVGNLGII). Topologically, residues 45–52 (VLIFWDSC) are cytoplasmic. A helical transmembrane segment spans residues 53-73 (LHNPMYFFLSNLSLVDFCYSS). The Extracellular portion of the chain corresponds to 74-97 (AVTPIVMAGFLIEDKVISYNACAA). A disulfide bond links cysteine 95 and cysteine 187. The helical transmembrane segment at 98–118 (QMYIFVAFATVENYLLASMAY) threads the bilayer. Residues 119–131 (DRYAAVCKPLHYT) lie on the Cytoplasmic side of the membrane. The helical transmembrane segment at 132–152 (TTMTTTVCARLAIGSYLCGFL) threads the bilayer. N-linked (GlcNAc...) asparagine glycosylation occurs at asparagine 153. Over 153–194 (NASIHTGDTFSLSFCKSNEVHHFFCDIPAVMVLSCSDRHISE) the chain is Extracellular. The chain crosses the membrane as a helical span at residues 195–215 (LVLIYVVSFNIFIALLVILIS). At 216–235 (YTFIFITILKMHSASVYQKP) the chain is on the cytoplasmic side. Residues 236-256 (LSTCASHFIAVGIFYGTIIFM) traverse the membrane as a helical segment. Topologically, residues 257-269 (YLQPSSSHSMDTD) are extracellular. Residues 270–290 (KMAPVFYTMVIPMLNPLVYSL) form a helical membrane-spanning segment. The Cytoplasmic segment spans residues 291 to 314 (RNKEVKSAFKKVVEKAKLSVGWSV).

This sequence belongs to the G-protein coupled receptor 1 family.

The protein localises to the cell membrane. Its function is as follows. Odorant receptor. The sequence is that of Olfactory receptor 5B3 (OR5B3) from Homo sapiens (Human).